Reading from the N-terminus, the 299-residue chain is tRNA dimethylallyltransferase (299 aa).

An ATP-binding site is contributed by 11 to 18; that stretch reads GPTAVGKT. 13–18 contacts substrate; it reads TAVGKT. Residues 36–39 form an interaction with substrate tRNA region; the sequence is DSQQ.

Belongs to the IPP transferase family. As to quaternary structure, monomer. Requires Mg(2+) as cofactor.

The enzyme catalyses adenosine(37) in tRNA + dimethylallyl diphosphate = N(6)-dimethylallyladenosine(37) in tRNA + diphosphate. In terms of biological role, catalyzes the transfer of a dimethylallyl group onto the adenine at position 37 in tRNAs that read codons beginning with uridine, leading to the formation of N6-(dimethylallyl)adenosine (i(6)A). This Streptococcus pyogenes serotype M4 (strain MGAS10750) protein is tRNA dimethylallyltransferase.